The sequence spans 445 residues: METIFAQSSSFGKAGVAVFRVSGTKSLEVLKLLTGKSNFKPRFMYYQKLTSPESNDLIDNAMVVYFKAPNSFTGEDVVEIHTHGSKAISIMLTNALLNIPGVRLAEAGEFTKRAFLNNKFDLTAAEGIADLINAETIMQHKQAIRQAGGALEELYNSWRSQLLRIISLLEAYIDFPDEDIPESVLKDVTNTHKTLINTISEYLNDNRKGELLRSGLKLAIIGPPNAGKSSLLNFLMRRDIAIVSNIAGTTRDIIEGHLDIGGYPIILQDTAGIRGESNDVIEQEGIKRAIDSAKKADIKIVMFDAETLDSAVNEDITGLIDENTIVIINKIDLIPENRIFNIENKYRCLKVSIKNNIALPSILKNIEEIAENMAGFTETPYITNERHRHHLKQALVYLKDFNLDNDLVLATEDIRMTMRRIGAITGIIDVEEILGEIFKNFCIGK.

Residues arginine 20, glutamate 79, and lysine 119 each coordinate (6S)-5-formyl-5,6,7,8-tetrahydrofolate. Positions 215–371 constitute a TrmE-type G domain; sequence GLKLAIIGPP…ILKNIEEIAE (157 aa). Asparagine 225 serves as a coordination point for K(+). GTP contacts are provided by residues 225-230, 244-250, and 269-272; these read NAGKSS, SNIAGTT, and DTAG. Serine 229 serves as a coordination point for Mg(2+). Serine 244, isoleucine 246, and threonine 249 together coordinate K(+). Threonine 250 contacts Mg(2+). Lysine 445 is a binding site for (6S)-5-formyl-5,6,7,8-tetrahydrofolate.

The protein belongs to the TRAFAC class TrmE-Era-EngA-EngB-Septin-like GTPase superfamily. TrmE GTPase family. As to quaternary structure, homodimer. Heterotetramer of two MnmE and two MnmG subunits. The cofactor is K(+).

The protein localises to the cytoplasm. Its function is as follows. Exhibits a very high intrinsic GTPase hydrolysis rate. Involved in the addition of a carboxymethylaminomethyl (cmnm) group at the wobble position (U34) of certain tRNAs, forming tRNA-cmnm(5)s(2)U34. The sequence is that of tRNA modification GTPase MnmE from Rickettsia bellii (strain RML369-C).